Consider the following 234-residue polypeptide: MEFTPPLQQGILLRRYKRFLADVQLSDGSEITLHCPNTGSMRNCLYPGETVWFSTSDNPKRKYAHTWELMTTPNAGLIGIHSGQANTLAEEAINKGIITELTGYDSLSREVKYGDENSRIDILLQGAQKPACYIEVKSCTLLEDGQGYFPDAVSLRGQKHLRELMHMVSQGHRAVLLFVVQHSEIFSVAPAAHIDPEYAKLLKIAVLAGVEVLAYRCEMSPTEIHLAQACDVRV.

This sequence belongs to the SfsA family.

The sequence is that of Sugar fermentation stimulation protein homolog from Shewanella baltica (strain OS195).